The primary structure comprises 156 residues: 6,7-dimethyl-8-ribityllumazine synthase (156 aa).

5-amino-6-(D-ribitylamino)uracil contacts are provided by residues Trp-22, 56–58 (AYE), and 80–82 (AVI). 85 to 86 (DT) contributes to the (2S)-2-hydroxy-3-oxobutyl phosphate binding site. His-88 serves as the catalytic Proton donor. Phe-113 provides a ligand contact to 5-amino-6-(D-ribitylamino)uracil. (2S)-2-hydroxy-3-oxobutyl phosphate is bound at residue Arg-127.

This sequence belongs to the DMRL synthase family.

It carries out the reaction (2S)-2-hydroxy-3-oxobutyl phosphate + 5-amino-6-(D-ribitylamino)uracil = 6,7-dimethyl-8-(1-D-ribityl)lumazine + phosphate + 2 H2O + H(+). The protein operates within cofactor biosynthesis; riboflavin biosynthesis; riboflavin from 2-hydroxy-3-oxobutyl phosphate and 5-amino-6-(D-ribitylamino)uracil: step 1/2. Functionally, catalyzes the formation of 6,7-dimethyl-8-ribityllumazine by condensation of 5-amino-6-(D-ribitylamino)uracil with 3,4-dihydroxy-2-butanone 4-phosphate. This is the penultimate step in the biosynthesis of riboflavin. The polypeptide is 6,7-dimethyl-8-ribityllumazine synthase (Deinococcus deserti (strain DSM 17065 / CIP 109153 / LMG 22923 / VCD115)).